The sequence spans 66 residues: Xenoxin-3 (66 aa).

4 cysteine pairs are disulfide-bonded: Cys-3/Cys-24, Cys-17/Cys-37, Cys-43/Cys-58, and Cys-59/Cys-64.

As to expression, expressed by the skin dorsal glands.

The protein resides in the secreted. Functionally, lacks alpha-neurotoxic activity, has apparently no antibacterial activity, nor anti-coagulant potency. The sequence is that of Xenoxin-3 from Xenopus laevis (African clawed frog).